The following is a 94-amino-acid chain: Integration host factor subunit beta (94 aa).

It belongs to the bacterial histone-like protein family. As to quaternary structure, heterodimer of an alpha and a beta chain.

Functionally, this protein is one of the two subunits of integration host factor, a specific DNA-binding protein that functions in genetic recombination as well as in transcriptional and translational control. This is Integration host factor subunit beta from Sodalis glossinidius (strain morsitans).